Here is a 215-residue protein sequence, read N- to C-terminus: Orotidine 5'-phosphate decarboxylase (215 aa).

Substrate is bound by residues D12, K34, 60 to 69 (DFKVADIPNT), S117, 170 to 180 (PGVGAQGGSAA), G193, and R194. The active-site Proton donor is the K62.

It belongs to the OMP decarboxylase family. Type 1 subfamily. In terms of assembly, homodimer.

The enzyme catalyses orotidine 5'-phosphate + H(+) = UMP + CO2. It participates in pyrimidine metabolism; UMP biosynthesis via de novo pathway; UMP from orotate: step 2/2. Functionally, catalyzes the decarboxylation of orotidine 5'-monophosphate (OMP) to uridine 5'-monophosphate (UMP). The polypeptide is Orotidine 5'-phosphate decarboxylase (Methanococcoides burtonii (strain DSM 6242 / NBRC 107633 / OCM 468 / ACE-M)).